The sequence spans 160 residues: Ribosomal RNA large subunit methyltransferase H (160 aa).

Residues L76, G108, and 127-132 (LGKMTW) contribute to the S-adenosyl-L-methionine site.

Belongs to the RNA methyltransferase RlmH family. As to quaternary structure, homodimer.

It localises to the cytoplasm. The enzyme catalyses pseudouridine(1915) in 23S rRNA + S-adenosyl-L-methionine = N(3)-methylpseudouridine(1915) in 23S rRNA + S-adenosyl-L-homocysteine + H(+). In terms of biological role, specifically methylates the pseudouridine at position 1915 (m3Psi1915) in 23S rRNA. The sequence is that of Ribosomal RNA large subunit methyltransferase H from Sinorhizobium medicae (strain WSM419) (Ensifer medicae).